A 309-amino-acid chain; its full sequence is Foldase protein PrsA (309 aa).

A signal peptide spans 1 to 20 (MKKKIVAGAVTLLSVAVLAA). Cysteine 21 is lipidated: N-palmitoyl cysteine. A lipid anchor (S-diacylglycerol cysteine) is attached at cysteine 21. One can recognise a PpiC domain in the interval 144-241 (TPEVTAQIIK…ASYYIVKLVS (98 aa)).

This sequence belongs to the PrsA family.

The protein localises to the cell membrane. The catalysed reaction is [protein]-peptidylproline (omega=180) = [protein]-peptidylproline (omega=0). Functionally, plays a major role in protein secretion by helping the post-translocational extracellular folding of several secreted proteins. The polypeptide is Foldase protein PrsA (Streptococcus gordonii (strain Challis / ATCC 35105 / BCRC 15272 / CH1 / DL1 / V288)).